A 289-amino-acid polypeptide reads, in one-letter code: Oxaloacetate decarboxylase (289 aa).

Ser50 is a binding site for substrate. A Mg(2+)-binding site is contributed by Asp88. The substrate site is built by Arg159 and His235.

It belongs to the isocitrate lyase family. Oxaloacetate decarboxylase subfamily. Homotetramer; dimer of dimers. Mg(2+) serves as cofactor.

It catalyses the reaction oxaloacetate + H(+) = pyruvate + CO2. Catalyzes the decarboxylation of oxaloacetate into pyruvate. Seems to play a role in maintaining cellular concentrations of bicarbonate and pyruvate. The chain is Oxaloacetate decarboxylase from Pseudomonas fluorescens (strain SBW25).